The sequence spans 94 residues: Acylphosphatase (94 aa).

The region spanning 5–94 (RLTAFVHGHV…PRDVEGFVER (90 aa)) is the Acylphosphatase-like domain. Active-site residues include Arg20 and Asn38.

It belongs to the acylphosphatase family.

The enzyme catalyses an acyl phosphate + H2O = a carboxylate + phosphate + H(+). This chain is Acylphosphatase (acyP), found in Corynebacterium glutamicum (strain ATCC 13032 / DSM 20300 / JCM 1318 / BCRC 11384 / CCUG 27702 / LMG 3730 / NBRC 12168 / NCIMB 10025 / NRRL B-2784 / 534).